Consider the following 259-residue polypeptide: 5'-nucleotidase SurE (259 aa).

Residues D8, D9, S40, and N92 each coordinate a divalent metal cation.

The protein belongs to the SurE nucleotidase family. Requires a divalent metal cation as cofactor.

It localises to the cytoplasm. It catalyses the reaction a ribonucleoside 5'-phosphate + H2O = a ribonucleoside + phosphate. Nucleotidase that shows phosphatase activity on nucleoside 5'-monophosphates. The chain is 5'-nucleotidase SurE from Xanthomonas campestris pv. campestris (strain B100).